Reading from the N-terminus, the 433-residue chain is MNVTSPKDGNHSFSKKNRFNTNKPRFHKLNEQAQSINLPEDRDSIVSSNTTSIMTDDAFDYNEGIASRTKNINSDSDRSNDTIKQNNYNKRETGYNPFYNGSGINQRYTQFRKREFEPTLAENKAEEYISDEDNVKIDEDNIENELQFTPKIKEASILRSSLLGQRNVLNTRNPKSKESHIKVKPIINNKSSSQRKSSAALRKQLGKPLPLPYLNSPNSDSTPTLQRKEEVFTDEVLQKKRELIESKWHRLLFHDKKMVEKKLESLREYERKRMPPRGTDVSSSEQDNSFKISTPTKSYVSLEQKPLPNLSAMNNFNDVTDNKEKEETNNNILKFQAQRDPLQILQSEIEMHTKKLDTIIELLKDDTDSKEKRKVVTNDNAAPEQMVNKGWRKNVMMIYKKSGNIMKKYREYFLWTICILILLYCNIYVYYRF.

Disordered stretches follow at residues 1-38 (MNVT…SINL), 69-101 (TKNI…FYNG), and 207-227 (KPLP…TLQR). T233 is modified (phosphothreonine).

Interacts with SPC72.

The protein resides in the cytoplasm. Its subcellular location is the cytoskeleton. It localises to the microtubule organizing center. The protein localises to the spindle pole body. In terms of biological role, KAR1 is required for function of both intranuclear and extranuclear microtubules. KAR1 helps localize CDC31 to the spindle pole body (SPB), CDC31 then initiates SPB duplication via interaction with a downstream effector. In Saccharomyces cerevisiae (strain ATCC 204508 / S288c) (Baker's yeast), this protein is Cell division control protein KAR1 (KAR1).